A 377-amino-acid polypeptide reads, in one-letter code: Succinyl-diaminopimelate desuccinylase (377 aa).

H68 serves as a coordination point for Zn(2+). Residue D70 is part of the active site. Position 101 (D101) interacts with Zn(2+). Catalysis depends on E135, which acts as the Proton acceptor. Positions 136, 164, and 350 each coordinate Zn(2+).

This sequence belongs to the peptidase M20A family. DapE subfamily. In terms of assembly, homodimer. Zn(2+) serves as cofactor. Co(2+) is required as a cofactor.

The enzyme catalyses N-succinyl-(2S,6S)-2,6-diaminopimelate + H2O = (2S,6S)-2,6-diaminopimelate + succinate. It participates in amino-acid biosynthesis; L-lysine biosynthesis via DAP pathway; LL-2,6-diaminopimelate from (S)-tetrahydrodipicolinate (succinylase route): step 3/3. In terms of biological role, catalyzes the hydrolysis of N-succinyl-L,L-diaminopimelic acid (SDAP), forming succinate and LL-2,6-diaminopimelate (DAP), an intermediate involved in the bacterial biosynthesis of lysine and meso-diaminopimelic acid, an essential component of bacterial cell walls. The sequence is that of Succinyl-diaminopimelate desuccinylase from Acinetobacter baumannii (strain AB307-0294).